The chain runs to 326 residues: Phospho-N-acetylmuramoyl-pentapeptide-transferase (326 aa).

Helical transmembrane passes span 3–23 (ISIS…PAFI), 51–71 (TMGG…FALF), 79–99 (VGMI…DDFL), 115–135 (LALQ…GGDI), 138–158 (VFGY…FWLV), 169–189 (GVDG…GVIA), 195–215 (MDIL…FIFN), 221–243 (VFMG…MALH), and 306–326 (FFFW…LYLM).

This sequence belongs to the glycosyltransferase 4 family. MraY subfamily. Requires Mg(2+) as cofactor.

The protein resides in the cell membrane. It catalyses the reaction UDP-N-acetyl-alpha-D-muramoyl-L-alanyl-gamma-D-glutamyl-L-lysyl-D-alanyl-D-alanine + di-trans,octa-cis-undecaprenyl phosphate = Mur2Ac(oyl-L-Ala-gamma-D-Glu-L-Lys-D-Ala-D-Ala)-di-trans,octa-cis-undecaprenyl diphosphate + UMP. It functions in the pathway cell wall biogenesis; peptidoglycan biosynthesis. Catalyzes the initial step of the lipid cycle reactions in the biosynthesis of the cell wall peptidoglycan: transfers peptidoglycan precursor phospho-MurNAc-pentapeptide from UDP-MurNAc-pentapeptide onto the lipid carrier undecaprenyl phosphate, yielding undecaprenyl-pyrophosphoryl-MurNAc-pentapeptide, known as lipid I. The sequence is that of Phospho-N-acetylmuramoyl-pentapeptide-transferase from Streptococcus pneumoniae (strain 70585).